Reading from the N-terminus, the 43-residue chain is Disintegrin CV (43 aa).

Cystine bridges form between Cys1/Cys10, Cys6/Cys29, Cys7/Cys34, and Cys19/Cys36. Residues 1 to 43 (CTTGPCCRQCKLKPAGTTCWRTSVSSHYCTGRSCECPSYPGNG) enclose the Disintegrin domain. A Cell attachment site; atypical (RTS) motif is present at residues 21–23 (RTS).

Belongs to the disintegrin family. Short disintegrin subfamily. Monomer. As to expression, expressed by the venom gland.

The protein resides in the secreted. Its function is as follows. Specifically interacts with the alpha-1/beta-1 integrin (ITGA1/ITGB1). Exhibits highly inhibitory effects on cell adhesion and cell migration to collagens I and IV. Also shows in vivo anti-angiogenic activity. This Cerastes vipera (Sahara sand viper) protein is Disintegrin CV.